The primary structure comprises 314 residues: Porphobilinogen deaminase (314 aa).

Residue C234 is modified to S-(dipyrrolylmethanemethyl)cysteine.

Belongs to the HMBS family. In terms of assembly, monomer. Dipyrromethane serves as cofactor.

It carries out the reaction 4 porphobilinogen + H2O = hydroxymethylbilane + 4 NH4(+). It participates in porphyrin-containing compound metabolism; protoporphyrin-IX biosynthesis; coproporphyrinogen-III from 5-aminolevulinate: step 2/4. Its function is as follows. Tetrapolymerization of the monopyrrole PBG into the hydroxymethylbilane pre-uroporphyrinogen in several discrete steps. The polypeptide is Porphobilinogen deaminase (Mycobacterium ulcerans (strain Agy99)).